The sequence spans 125 residues: Small ribosomal subunit protein eS8 (125 aa).

The protein belongs to the eukaryotic ribosomal protein eS8 family. Part of the 30S ribosomal subunit.

The protein is Small ribosomal subunit protein eS8 of Methanocorpusculum labreanum (strain ATCC 43576 / DSM 4855 / Z).